The chain runs to 2671 residues: Stalled ribosome sensor GCN1 (2671 aa).

Position 2 is an N-acetylalanine (alanine 2). HEAT repeat units follow at residues 140–178 (NKLVEVQCLLLLEVLGGSHKHAVDGAVKKLTKLWKENPG), 257–293 (EFKDLILPTIQKSLLRSPENVIETISSLLASVTLDLS), 294–331 (QYALDIVKGLANQLKSNSPRLMDEAVLALRNLARQCSD), 385–423 (CVAELFIPFLQQEVHEGTLVHAVSILALWCNRFTTEVPK), 425–459 (LTDWFKKVFSLKTSTSAVRHAYLQCMLASFRGDTL), 460–500 (LQAL…SKLS), 560–597 (SKVQQYYRVLVAVLLSRTWHVRRQAQQTVRKLLSSLGG), 599–636 (KLANGLLDELKTVLNSHKVLPLEALVTDAGEVTEMGKT), 700–732 (AFITRHLDQIIPRITTQSPLNQSSMNAMGSLSV), and 733–772 (LSPDRVLPQLISTITASVQNPALCLVTREEFSIMQTPAGE). Phosphoserine is present on serine 729. Serine 786 carries the post-translational modification Phosphoserine. Residues 804-865 (QIIEMELKEE…EAALGLLDAI (62 aa)) are a coiled coil. HEAT repeat units lie at residues 879–918 (VLVDAFLPLLKSPLAAPRVKGPFLSLAACVMPPRLKTLGT), 979–1016 (SLVFPMLKMVLTEMPYHSEEEEEQMAQILQILTVHAQL), 1035–1072 (LPRVAMLRLLTWVIGTGSPRLQVLASDTLTALCASSSG), 1078–1115 (FAEQEEVDVLLAALQSPCASVRETALRGLMELRLVLPS), 1155–1192 (DLQSDLCSLLIDDVIYHEAAVRQAGAEALSQAVARYQR), 1210–1250 (YRPP…YLDS), 1251–1289 (SQVKPLFQFFVPDALNDRNPDVRKCMLDAALATLNAHGK), 1290–1332 (ENVN…HLDK), 1335–1372 (PKVKPIVAKLIAALSTPSQQVQESVASCLPPLVPAVKE), 1374–1410 (AGGMIQRLMQQLLESDKYAERKGAAYGLAGLVKGLGI), 1413–1451 (LKQQEMMAALTDAIQDKKNFRRREGALFAFEMLCTMLGK), 1455–1492 (PYVVHVLPHLLLCFGDGNQYVREAADDCAKAVMSNLSA), 1493–1530 (HGVKLVLPSLLAALEEESWRTKAGSVELLGAMAYCAPK), 1534–1571 (SCLPNIVPKLTEVLTDSHVKVQKAGQQALRQIGSVIRN), 1573–1609 (EILAIAPVLLDALTDPSRKTQKCLQTLLDTKFVHFID), 1611–1648 (PSLALIMPIVQRAFQDRSTDTRKMAAQIIGNMYSLTDQ), 1653–1690 (PYLPSVTPGLKASLLDPVPEVRTVSAKALGAMVKGMGE), 1692–1729 (CFEDLLPWLMETLTYEQSSVDRSGAAQGLAEVMAGLGV), 1731–1769 (KLEKLMPEIVATASKVDIAPHVRDGYIMMFNYLPITFGD), 1773–1810 (PYVGPIIPCILKALADENEFVRDTALRAGQRVISMYAE), 1812–1848 (AIALLLPQLEQGLFDDLWRIRFSSVQLLGDLLFHISG), 1921–1958 (EILPTLFGLLLGFLASTCADKRTIAARTLGDLVRKLGE), 1959–1996 (KILPEIIPILEEGLRSQKSDERQGVCIGLSEIMKSTSR), 2001–2038 (FFSESLVPTARKALCDPLEEVREAAAKTFEQLHSTIGH), 2039–2074 (QALEDILPFLLKQLDDEEVSEFALDGLKQVMAVKSR), 2076–2108 (VLPYLVPKLTTPPVNTRVLAFLSSVAGDALTRH), 2111–2146 (VILPAVMLALKEKLGTPDEQLEMANCQAVILSVEDD), 2147–2184 (TGHRIIIEDLLEATRSPEVGMRQAAAIILNMYCSRSKA), 2188–2225 (SHLRSLVSGLIRLFNDSSPVVLEESWDALNAITKKLDA), 2259–2296 (RGVTSILPVLREGVLTGSPEQKEEAAKGLGLVIRLTSA), 2301–2338 (PSVVSITGPLIRILGDRFNWTVKAALLETLSLLLGKVG), 2339–2380 (IALK…IHVK), 2382–2417 (DPLFTELLNGIRAVEDPGIRDTMLQALRFVIQGAGS), 2422–2459 (AIRKNLVSLLLSMLGHDEDNTRISTAGCLGELCAFLTD), 2546–2583 (QLPPRLSSLLIKCLQNPCSDIRLVAEKMIWWANKEPRP), 2588–2625 (QTIKPILKALLDNTKDKNTVVRAYSDQAIVNLLKMRRG), and 2627–2661 (ELLQSLSKILDVASLEALNECSRRSLRKLACQADS). An RWDBD region region spans residues 2260–2408 (GVTSILPVLR…GIRDTMLQAL (149 aa)). At serine 2276 the chain carries Phosphoserine.

Belongs to the GCN1 family. As to quaternary structure, interacts with EIF2AK4/GCN2; this interaction stimulates the EIF2AK4/GCN2 kinase activity and is impaired by IMPACT upon a variety of stress conditions, such as amino acid depletion, UV-C irradiation, proteasome inhibitor treatment and glucose deprivation. Interacts with IMPACT; this prevents the interaction of GCN1 with EIF2AK4/GCN2 and inhibits EIF2AK4/GCN2 kinase activity. Interacts with RNF14; interaction takes place following ribosome stalling and promotes recruitment of RNF14. Expressed in the hypothalamus, cortex and hippocampus.

Its subcellular location is the cytoplasm. Functionally, ribosome collision sensor that plays a key role in the RNF14-RNF25 translation quality control pathway, a pathway that takes place when a ribosome has stalled during translation, and which promotes ubiquitination and degradation of translation factors on stalled ribosomes. Directly binds to the ribosome and acts as a sentinel for colliding ribosomes: activated following ribosome stalling and promotes recruitment of RNF14, which directly ubiquitinates EEF1A1/eEF1A, leading to its degradation. In addition to EEF1A1/eEF1A, the RNF14-RNF25 translation quality control pathway mediates degradation of ETF1/eRF1 and ubiquitination of ribosomal protein. GCN1 also acts as a positive activator of the integrated stress response (ISR) by mediating activation of EIF2AK4/GCN2 in response to amino acid starvation. Interaction with EIF2AK4/GCN2 on translating ribosomes stimulates EIF2AK4/GCN2 kinase activity, leading to phosphorylation of eukaryotic translation initiation factor 2 (eIF-2-alpha/EIF2S1). EIF2S1/eIF-2-alpha phosphorylation converts EIF2S1/eIF-2-alpha into a global protein synthesis inhibitor, leading to a global attenuation of cap-dependent translation, and thus to a reduced overall utilization of amino acids, while concomitantly initiating the preferential translation of ISR-specific mRNAs, such as the transcriptional activator ATF4, and hence allowing ATF4-mediated reprogramming of amino acid biosynthetic gene expression to alleviate nutrient depletion. The polypeptide is Stalled ribosome sensor GCN1 (Mus musculus (Mouse)).